The sequence spans 1050 residues: Diacylglycerol kinase iota (1050 aa).

Disordered regions lie at residues P53–A74, A92–E111, and S328–G356. The segment covering A92 to G105 has biased composition (low complexity). The span at S332 to K347 shows a compositional bias: basic residues. Positions P367–N502 constitute a DAGKc domain. ANK repeat units follow at residues G943–L972 and T979–Q1008. A PDZ-binding motif is present at residues T1048–V1050.

Belongs to the eukaryotic diacylglycerol kinase family. As to quaternary structure, interacts (via PDZ-binding motif) with DLG4; controls the localization of DGKI to the synapse. Interacts (via PDZ-binding motif) with DLG1. Interacts (via PDZ-binding motif) with DLG2. Interacts (via PDZ-binding motif) with DLG3. May interact with RASGRP3; involved in the regulation of RASGRP3 activity. In brain, expressed in the hippocampus and cerebellum with stronger expression in the Purkinje cell layer (at protein level). Expressed in kidney.

The protein resides in the cell projection. It localises to the axon. The protein localises to the dendrite. It is found in the presynapse. Its subcellular location is the postsynapse. The protein resides in the postsynaptic density. It localises to the synaptic cell membrane. The protein localises to the cytoplasmic vesicle. It is found in the secretory vesicle. Its subcellular location is the synaptic vesicle membrane. The protein resides in the cytoplasm. It localises to the cytosol. The protein localises to the nucleus. It carries out the reaction a 1,2-diacyl-sn-glycerol + ATP = a 1,2-diacyl-sn-glycero-3-phosphate + ADP + H(+). The catalysed reaction is 1,2-di-(9Z-octadecenoyl)-sn-glycerol + ATP = 1,2-di-(9Z-octadecenoyl)-sn-glycero-3-phosphate + ADP + H(+). It catalyses the reaction 1-octadecanoyl-2-(5Z,8Z,11Z,14Z-eicosatetraenoyl)-sn-glycerol + ATP = 1-octadecanoyl-2-(5Z,8Z,11Z,14Z-eicosatetraenoyl)-sn-glycero-3-phosphate + ADP + H(+). The enzyme catalyses 1-octadecanoyl-2-(9Z,12Z)-octadecadienoyl-sn-glycerol + ATP = 1-octadecanoyl-2-(9Z,12Z-octadecadienoyl)-sn-glycero-3-phosphate + ADP + H(+). It functions in the pathway lipid metabolism; glycerolipid metabolism. Diacylglycerol kinase that converts diacylglycerol/DAG into phosphatidic acid/phosphatidate/PA and regulates the respective levels of these two bioactive lipids. Thereby, acts as a central switch between the signaling pathways activated by these second messengers with different cellular targets and opposite effects in numerous biological processes. Has probably no preference for any of the diacylglycerols in terms of the acyl chain composition, especially for the acyl chain at the sn-2 position. By controlling the diacylglycerol/DAG-mediated activation of RASGRP3, negatively regulates the Rap1 signaling pathway. May play a role in presynaptic diacylglycerol/DAG signaling and control neurotransmitter release during metabotropic glutamate receptor-dependent long-term depression. This chain is Diacylglycerol kinase iota, found in Mus musculus (Mouse).